Reading from the N-terminus, the 139-residue chain is MKKTAVLNAQLSGVIASLGHTDGLTICDAGLPIPSEQQCVDLALTKGVPSFLSTLEVVLTELFVERILLAEEIKQANPTIEQQLLEMINKLAQTQGRQIEIEYVVHSEFKQRSNQAKAVVRTGECSPYANVILYSGVPF.

Residue histidine 20 is the Proton donor of the active site. Substrate is bound by residues aspartate 28, histidine 106, and 128-130 (YAN).

The protein belongs to the RbsD / FucU family. RbsD subfamily. As to quaternary structure, homodecamer.

The protein resides in the cytoplasm. It carries out the reaction beta-D-ribopyranose = beta-D-ribofuranose. The protein operates within carbohydrate metabolism; D-ribose degradation; D-ribose 5-phosphate from beta-D-ribopyranose: step 1/2. In terms of biological role, catalyzes the interconversion of beta-pyran and beta-furan forms of D-ribose. This chain is D-ribose pyranase, found in Actinobacillus pleuropneumoniae serotype 5b (strain L20).